The following is a 396-amino-acid chain: Bone morphogenetic protein 2 (396 aa).

An N-terminal signal peptide occupies residues 1-23; sequence MVAGTRCLLALLLPQVLLGGAAG. Residues 24–282 constitute a propeptide, cleaved by PCSK5; that stretch reads LVPELGRRKF…GHPLHKREKR (259 aa). The tract at residues 84–121 is disordered; the sequence is RRHSGQPGSPAPDHRLERAASRANTVRSFHHEESLEEL. S87 is modified (phosphoserine). N-linked (GlcNAc...) asparagine glycosylation is found at N135, N163, N164, and N200. The interval 271–293 is disordered; it reads GKGHPLHKREKRQAKHKQRKRLK. Residues 274–293 show a composition bias toward basic residues; it reads HPLHKREKRQAKHKQRKRLK. 3 cysteine pairs are disulfide-bonded: C296-C361, C325-C393, and C329-C395. A glycan (N-linked (GlcNAc...) (high mannose) asparagine) is linked at N338.

The protein belongs to the TGF-beta family. Homodimer; disulfide-linked. Interacts with SOSTDC1. Interacts with GREM2, RGMA, RGMB and RGMC. Interacts with ASPN. Interacts with MAFP5. Interacts with FBN1 (via N-terminal domain) and FBN2. Interacts with type I receptor BMPR1A. Interacts with type II receptor BMPR2. Interacts with SCUBE3. Interacts with TNFAIP6 (primarily via Link domain); this interaction is inhibited by hyaluronan. Interacts with ERFE. Interacts with BMPR1A/ALK3; the interaction may induce HAMP expression. Forms heterodimers with BMP6 in vitro; the heterodimer then binds to its receptor BMPR1A /ALK3 and may induce HAMP expression. Interacts with TGFBR3. As to expression, particularly abundant in lung, spleen and colon and in low but significant levels in heart, brain, placenta, liver, skeletal muscle, kidney, pancreas, prostate, ovary and small intestine.

It is found in the secreted. In terms of biological role, growth factor of the TGF-beta superfamily that plays essential roles in many developmental processes, including cardiogenesis, neurogenesis, and osteogenesis. Induces cartilage and bone formation. Initiates the canonical BMP signaling cascade by associating with type I receptor BMPR1A and type II receptor BMPR2. Once all three components are bound together in a complex at the cell surface, BMPR2 phosphorylates and activates BMPR1A. In turn, BMPR1A propagates signal by phosphorylating SMAD1/5/8 that travel to the nucleus and act as activators and repressors of transcription of target genes. Also acts to promote expression of HAMP, via the interaction with its receptor BMPR1A/ALK3. Can also signal through non-canonical pathways such as ERK/MAP kinase signaling cascade that regulates osteoblast differentiation. Also stimulates the differentiation of myoblasts into osteoblasts via the EIF2AK3-EIF2A-ATF4 pathway by stimulating EIF2A phosphorylation which leads to increased expression of ATF4 which plays a central role in osteoblast differentiation. Acts as a positive regulator of odontoblast differentiation during mesenchymal tooth germ formation, expression is repressed during the bell stage by MSX1-mediated inhibition of CTNNB1 signaling. The polypeptide is Bone morphogenetic protein 2 (BMP2) (Homo sapiens (Human)).